We begin with the raw amino-acid sequence, 302 residues long: tRNA pseudouridine synthase B (302 aa).

Aspartate 45 acts as the Nucleophile in catalysis.

Belongs to the pseudouridine synthase TruB family. Type 1 subfamily.

The catalysed reaction is uridine(55) in tRNA = pseudouridine(55) in tRNA. Functionally, responsible for synthesis of pseudouridine from uracil-55 in the psi GC loop of transfer RNAs. This Francisella tularensis subsp. tularensis (strain FSC 198) protein is tRNA pseudouridine synthase B.